The sequence spans 545 residues: Chaperonin GroEL (545 aa).

ATP is bound by residues 30–33 (TMGP), Lys-51, 87–91 (DGTTT), Gly-416, 479–481 (NAA), and Asp-495.

The protein belongs to the chaperonin (HSP60) family. As to quaternary structure, forms a cylinder of 14 subunits composed of two heptameric rings stacked back-to-back. Interacts with the co-chaperonin GroES.

The protein localises to the cytoplasm. The enzyme catalyses ATP + H2O + a folded polypeptide = ADP + phosphate + an unfolded polypeptide.. In terms of biological role, together with its co-chaperonin GroES, plays an essential role in assisting protein folding. The GroEL-GroES system forms a nano-cage that allows encapsulation of the non-native substrate proteins and provides a physical environment optimized to promote and accelerate protein folding. The polypeptide is Chaperonin GroEL (Nautilia profundicola (strain ATCC BAA-1463 / DSM 18972 / AmH)).